A 161-amino-acid polypeptide reads, in one-letter code: Nucleotide-binding protein Nmul_A1044 (161 aa).

This sequence belongs to the YajQ family.

Nucleotide-binding protein. The sequence is that of Nucleotide-binding protein Nmul_A1044 from Nitrosospira multiformis (strain ATCC 25196 / NCIMB 11849 / C 71).